Consider the following 5289-residue polypeptide: Mucin-2 (5289 aa).

Positions 1-20 are cleaved as a signal peptide; sequence MGLPLARLAAVCLALSLAGG. S21 is subject to Phosphoserine. Position 34 (H34) interacts with Cu(2+). Residues 35–207 enclose the VWFD 1 domain; sequence NVCSTWGNFH…KINQPDVVCE (173 aa). Intrachain disulfides connect C37–C169, C59–C206, C67–C166, C218–C255, C225–C250, C237–C275, C257–C263, C265–C291, C295–C329, C308–C321, C312–C351, C331–C345, C353–C375, C370–C387, C373–C382, C391–C528, C413–C563, C435–C443, C574–C619, C588–C614, C601–C639, C621–C627, C629–C654, C661–C698, C674–C688, C678–C718, C700–C712, C720–C742, and C740–C749. Residue D49 participates in Ca(2+) binding. Residues M146 and M154 each coordinate Cu(+). E156 provides a ligand contact to Cu(2+). An N-linked (GlcNAc...) asparagine glycan is attached at N163. The Ca(2+) site is built by D171, N173, L175, and E180. A Cu(2+)-binding site is contributed by H277. The TIL domain occupies 295 to 351; the sequence is CPGNLVYLESGSPCMDTCSHLEVSSLCEEHRMDGCFCPEGTVYDDIGDSGCVPVSQC. H324 contributes to the Cu(2+) binding site. M326 contacts Cu(+). Positions 389–564 constitute a VWFD 2 domain; it reads GTCALEGGSH…NTWKAQSSCH (176 aa). Position 403 (D403) interacts with Ca(2+). An N-linked (GlcNAc...) asparagine glycan is attached at N423. The Ca(2+) site is built by N530, N532, L534, D537, and D538. N670 carries an N-linked (GlcNAc...) asparagine glycan. A glycan (N-linked (GlcNAc...) asparagine) is linked at N770. Disulfide bonds link C784-C820, C802-C814, C822-C844, C839-C856, C842-C851, C860-C992, C882-C1027, C891-C989, C909-C916, C1037-C1080, C1051-C1075, C1062-C1102, C1082-C1090, C1092-C1117, C1108-C1137, C1121-C1163, C1145-C1187, C1167-C1181, C1189-C1213, C1208-C1238, and C1211-C1221. The VWFD 3 domain occupies 858-1028; it reads GTCSIYGSGH…NSWKEAPTCP (171 aa). A Ca(2+)-binding site is contributed by D872. N894 carries an N-linked (GlcNAc...) asparagine glycan. Residues N994, D996, R998, N1001, and D1002 each coordinate Ca(2+). N-linked (GlcNAc...) asparagine glycosylation is found at N1139 and N1154. 3 N-linked (GlcNAc...) asparagine glycosylation sites follow: N1215, N1230, and N1246. O-linked (GalNAc) threonine glycans are attached at residues T1266, T1267, T1269, T1270, T1272, T1275, T1276, T1281, T1282, and T1287. Residues S1291 and S1292 are each glycosylated (O-linked (GalNAc) serine). T1293 is a glycosylation site (O-linked (GalNAc) threonine). S1296 carries O-linked (GalNAc) serine glycosylation. Residue T1297 is glycosylated (O-linked (GalNAc) threonine). Ca(2+) is bound by residues N1310, D1312, H1313, S1316, D1319, G1321, D1322, E1324, D1381, and Y1382. Pro residues-rich tracts occupy residues 1399 to 1411, 1419 to 1510, 1520 to 1549, 1559 to 1628, and 1638 to 1679; these read PSPP…PPPT, TTTP…PITP, and TTTP…PPTT. A disordered region spans residues 1399 to 1773; the sequence is PSPPTTTPSP…SITPPTFSPF (375 aa). 6 repeat units span residues 1401 to 1416, 1417 to 1432, 1433 to 1448, 1449 to 1464, 1465 to 1471, and 1472 to 1478. The tract at residues 1401–1747 is approximate repeats; it reads PPTTTPSPPP…SPPTTTMTTL (347 aa). The 7A repeat unit spans residues 1479-1494; it reads PPTTTPSPPTTTTTTP. The 7B repeat unit spans residues 1495–1517; sequence PPTTTPSPPTTTPITPPASTTTL. Residues 1518–1533 form an 8A repeat; that stretch reads PPTTTPSPPTTTTTTP. One copy of the 8B repeat lies at 1534–1556; the sequence is PPTTTPSPPTTTPITPPTSTTTL. Residues 1557–1572 form a 9A repeat; it reads PPTTTPSPPPTTTTTP. Residues 1573–1596 form a 9B repeat; that stretch reads PPTTTPSPPTTTTPSPPTITTTTP. The 10A repeat unit spans residues 1597–1612; sequence PPTTTPSPPTTTTTTP. The 10B repeat unit spans residues 1613 to 1635; the sequence is PPTTTPSPPTTTPITPPTSTTTL. The stretch at 1636-1651 is one 11A repeat; that stretch reads PPTTTPSPPPTTTTTP. One copy of the 11B repeat lies at 1652 to 1675; the sequence is PPTTTPSPPTTTTPSPPITTTTTP. 5 consecutive repeat copies span residues 1676-1683, 1684-1699, 1700-1715, 1716-1731, and 1732-1747. 2 stretches are compositionally biased toward low complexity: residues 1680–1720 and 1741–1759; these read TPSS…STTT and TTTM…LTTT. Pro residues predominate over residues 1760–1770; the sequence is PLPPSITPPTF. N1787 and N1820 each carry an N-linked (GlcNAc...) asparagine glycan. Composition is skewed to low complexity over residues 1885–2158, 2165–4238, 4269–4315, and 4329–4430; these read MTTT…TMVT, GTQT…QTPT, TTVT…STAP, and STPQ…PSII. Disordered stretches follow at residues 1885 to 4238 and 4269 to 4430; these read MTTT…QTPT and TTVT…PSII. Residues N4449, N4461, N4472, and N4483 are each glycosylated (N-linked (GlcNAc...) asparagine). The segment at 4492-4524 is disordered; the sequence is PTPTPSKSTPTPSKPSSTPSKPTPGTKPPECPD. Over residues 4496-4511 the composition is skewed to low complexity; it reads PSKSTPTPSKPSSTPS. Residues 4512 to 4522 are compositionally biased toward pro residues; it reads KPTPGTKPPEC. Residues N4532, N4548, and N4612 are each glycosylated (N-linked (GlcNAc...) asparagine). Residues 4589-4772 enclose the VWFD 4 domain; sequence CYCTGWGDPH…VNDPSKPHCP (184 aa). Intrachain disulfides connect C4591-C4732, C4613-C4771, and C4637-C4645. N-linked (GlcNAc...) asparagine glycans are attached at residues N4726 and N4737. The segment at 4770-4795 is disordered; sequence HCPHSSSTTKRPAVTVPGGGKTTPHK. N-linked (GlcNAc...) asparagine glycans are attached at residues N4862, N4897, N4991, N4998, N5065, N5080, N5129, N5148, and N5179. The VWFC 1 domain occupies 4927 to 4996; it reads CVGPDNVPRE…DTCCNITVCK (70 aa). Positions 5034–5101 constitute a VWFC 2 domain; the sequence is GVCVHGNAEY…APGECCKKCE (68 aa). 4 cysteine pairs are disulfide-bonded: C5185-C5232, C5199-C5246, C5208-C5262, and C5212-C5264. A CTCK domain is found at 5185 to 5270; the sequence is CSTVPVTTEV…SCQCQDTVCG (86 aa).

Homomultimer; disulfide-linked. The N- and C-terminus mediate their assembly into higher order structures to form filaments. The CTCK domains of two polypeptides associate in the endoplasmic reticulum to generate intermolecularly disulfide-bonded dimers. These dimers progress to the Golgi apparatus, which is a more acidic environment than the endoplasmic reticulum. Under acidic conditions, the N-termini form non-covalent intermolecular interactions that juxtapose assemblies of the third VWD domain (VWD3) from different CTCK-linked dimers. The VWD3 assemblies then become disulfide bonded to one another to produce long, disulfide-linked polymers that remain highly compact until secretion. Interacts with FCGBP. Interacts with AGR2; disulfide-linked. In terms of assembly, (Microbial infection) Interacts in vitro with L.monocytogenes internalin proteins InlB, InlC and InlJ; for InlC binding is slightly better at pH 5.5, (the pH of the intestine) than at pH 7.4. In terms of processing, O-glycosylated. O-glycosylation is required for mucin assembly. Goblet cells synthesize two forms of mucin that differ in branched chain O-glycosylation and the site of production in the colon. May undergo proteolytic cleavage in the outer mucus layer of the colon, contributing to the expanded volume and loose nature of this layer which allows for bacterial colonization in contrast to the inner mucus layer which is dense and devoid of bacteria. Post-translationally, at low pH of 6 and under, undergoes autocatalytic cleavage in vitro in the N-terminal region of the fourth VWD domain. It is likely that this also occurs in vivo and is triggered by the low pH of the late secretory pathway. As to expression, colon, small intestine, colonic tumors, bronchus, cervix and gall bladder.

It is found in the secreted. In terms of biological role, coats the epithelia of the intestines and other mucus membrane-containing organs to provide a protective, lubricating barrier against particles and infectious agents at mucosal surfaces. Major constituent of the colon mucus, which is mainly formed by large polymeric networks of MUC2 secreted by goblet cells that cover the exposed surfaces of intestine. MUC2 networks form hydrogels that guard the underlying epithelium from pathogens and other hazardous matter entering from the outside world, while permitting nutrient absorption and gas exchange. Acts as a divalent copper chaperone that protects intestinal cells from copper toxicity and facilitates nutritional copper unptake into cells. Binds both Cu(2+) and its reduced form, Cu(1+), at two juxtaposed binding sites: Cu(2+), once reduced to Cu(1+) by vitamin C (ascorbate) or other dietary antioxidants, transits to the other binding site. MUC2-bound Cu(1+) is protected from oxidation in aerobic environments, and can be released for nutritional delivery to cells. Mucin gels store antimicrobial molecules that participate in innate immunity. Mucin glycoproteins also house and feed the microbiome, lubricate tissue surfaces, and may facilitate the removal of contaminants and waste products from the body. Goblet cells synthesize two forms of MUC2 mucin that differ in branched chain O-glycosylation and the site of production in the colon: a (1) 'thick' mucus that wraps the microbiota to form fecal pellets is produced in the proximal, ascending colon. 'Thick' mucus transits along the descending colon and is lubricated by a (2) 'thin' MUC2 mucus produced in the distal colon which adheres to the 'thick' mucus. This chain is Mucin-2, found in Homo sapiens (Human).